Here is a 597-residue protein sequence, read N- to C-terminus: Leukocyte immunoglobulin-like receptor subfamily B member 2 (597 aa).

The signal sequence occupies residues 1 to 21 (MTPIVTVLICLGLSLGPRTRV). The Extracellular portion of the chain corresponds to 22 to 460 (QTGTIPKPTL…QSGLGRHLGV (439 aa)). Ig-like C2-type domains follow at residues 27–110 (PKPT…SELS), 111–229 (DPLV…SLSV), 230–318 (QPGP…ILIT), and 330–419 (QPGP…LVVS). Disulfide bonds link Cys49-Cys98, Cys144-Cys196, Cys156-Cys166, and Cys245-Cys296. N-linked (GlcNAc...) asparagine glycans are attached at residues Asn280, Asn301, and Asn340. A disulfide bond links Cys345 and Cys396. The interval 417-451 (VVSGPSMGSSPPPTGPISTPGPEDQPLTPTGSDPQ) is disordered. The helical transmembrane segment at 461–481 (VIGILVAVVLLLLLLLLLFLI) threads the bilayer. Residues 482-597 (LRHRRQGKHW…PSIYATLAIH (116 aa)) lie on the Cytoplasmic side of the membrane. The tract at residues 491 to 523 (WTSTQRKADFQHPAGAVGPEPTDRGLQWRSSPA) is disordered. 3 consecutive short sequence motifs (ITIM motif) follow at residues 530–535 (NLYAAV), 559–564 (VTYAQL), and 589–594 (SIYATL). Residues 537-597 (DTQPEDGVEM…PSIYATLAIH (61 aa)) form a disordered region.

As to quaternary structure, binds PTPN6 when phosphorylated. Binds FCGR1A. Interacts with peptide-bound HLA-G-B2M; this interaction is direct. Interacts with peptide-bound HLA-F-B2M; this interaction is direct. Post-translationally, phosphorylated on tyrosine residues. Dephosphorylated by PTPN6. In terms of tissue distribution, expressed in monocytes and at lower levels in myeloid and plasmacytoid dendritic cells. Expressed in tolerogenic IL10-producing dendritic cells. Expressed in myeloid-derived suppressor cells during pregnancy. Detected at low levels in natural killer (NK) cells. Expressed in B cells.

It localises to the cell membrane. Receptor for class I MHC antigens. Recognizes a broad spectrum of HLA-A, HLA-B, HLA-C, HLA-G and HLA-F alleles. Involved in the down-regulation of the immune response and the development of tolerance. Recognizes HLA-G in complex with B2M/beta-2 microglobulin and a nonamer self-peptide (peptide-bound HLA-G-B2M) triggering differentiation of type 1 regulatory T cells and myeloid-derived suppressor cells, both of which actively maintain maternal-fetal tolerance. Competes with CD8A for binding to class I MHC antigens. Inhibits FCGR1A-mediated phosphorylation of cellular proteins and mobilization of intracellular calcium ions. This Homo sapiens (Human) protein is Leukocyte immunoglobulin-like receptor subfamily B member 2.